We begin with the raw amino-acid sequence, 899 residues long: RNA-binding motif protein 25 (899 aa).

Positions 1 to 20 are enriched in polar residues; that stretch reads MADESSSPATGDPNSQKPES. A disordered region spans residues 1 to 112; the sequence is MADESSSPAT…SMPQYQPQPG (112 aa). Pro residues predominate over residues 26–63; that stretch reads IPNPNPNPSLTPPPPQQHSQPPVAPLVPPGPPYAPPAQ. The RRM domain maps to 204 to 281; sequence TTIYIGKIAT…QELLVNVNQA (78 aa). 2 disordered regions span residues 298–572 and 611–778; these read KKAK…EQNL and GESA…KESG. 2 stretches are compositionally biased toward basic and acidic residues: residues 317-340 and 354-372; these read EQDK…KENI and EADR…ERLK. A compositionally biased stretch (pro residues) spans 375-384; sequence PLPPPPPPPA. Over residues 430–505 the composition is skewed to basic and acidic residues; the sequence is WSKRNDRRSR…QYEKEKEKEK (76 aa). Residues 434–578 are a coiled coil; that stretch reads NDRRSRERGE…EQNLQQQQLD (145 aa). A compositionally biased stretch (acidic residues) spans 515–524; it reads YEEEEEEDDD. Positions 526-533 match the Nuclear localization signal 1 motif; it reads SRRRWHRA. Over residues 533-568 the composition is skewed to basic and acidic residues; it reads AALDERRRRQLREKEDDLADRLKEEEEVAEAKRSAE. Over residues 626–640 the composition is skewed to polar residues; the sequence is GSGNESMAIDNNSGS. Basic and acidic residues-rich tracts occupy residues 723 to 733 and 740 to 778; these read PKEETIETEKQ and DKAS…KESG. Residues 735 to 742 carry the Nuclear localization signal 2 motif; sequence SRRSHDKA. The PWI domain maps to 802 to 899; sequence EDLFSYEINW…EAGVPVKSKA (98 aa).

Specifically associates with functional splicing complexes. Associates with exon junction complex (EJC) proteins. In terms of processing, phosphorylated; the phosphorylation level is repressed by abscisic acid (ABA).

The protein resides in the nucleus. Its function is as follows. RNA-binding protein that acts as a regulator of alternative pre-mRNA splicing. Negative regulator of responses to abscisic acid (ABA), including in early development. The protein is RNA-binding motif protein 25 of Arabidopsis thaliana (Mouse-ear cress).